A 218-amino-acid polypeptide reads, in one-letter code: Ribosome maturation factor RimM (218 aa).

In terms of domain architecture, PRC barrel spans 141–214; sequence GELWWDRDLV…HIVVDPPPGL (74 aa).

This sequence belongs to the RimM family. Binds ribosomal protein uS19.

The protein resides in the cytoplasm. Functionally, an accessory protein needed during the final step in the assembly of 30S ribosomal subunit, possibly for assembly of the head region. Essential for efficient processing of 16S rRNA. May be needed both before and after RbfA during the maturation of 16S rRNA. It has affinity for free ribosomal 30S subunits but not for 70S ribosomes. In Parafrankia sp. (strain EAN1pec), this protein is Ribosome maturation factor RimM.